Consider the following 204-residue polypeptide: UPF0228 protein MA_0511 (204 aa).

This sequence belongs to the UPF0228 family.

This Methanosarcina acetivorans (strain ATCC 35395 / DSM 2834 / JCM 12185 / C2A) protein is UPF0228 protein MA_0511.